Here is a 28-residue protein sequence, read N- to C-terminus: Conotoxin Cl5.3 (28 aa).

It belongs to the conotoxin T superfamily. Post-translationally, contains 2 disulfide bonds that can be either 'C1-C3, C2-C4' or 'C1-C4, C2-C3', since these disulfide connectivities have been observed for conotoxins with cysteine framework V (for examples, see AC P0DQQ7 and AC P81755). Expressed by the venom duct.

Its subcellular location is the secreted. The polypeptide is Conotoxin Cl5.3 (Californiconus californicus (California cone)).